The sequence spans 183 residues: Apo-citrate lyase phosphoribosyl-dephospho-CoA transferase (183 aa).

This sequence belongs to the CitX family.

The catalysed reaction is apo-[citrate lyase ACP] + 2'-(5''-triphospho-alpha-D-ribosyl)-3'-dephospho-CoA = holo-[citrate lyase ACP] + diphosphate. Its function is as follows. Transfers 2-(5''-triphosphoribosyl)-3'-dephosphocoenzyme-A on a serine residue to the apo-acyl carrier protein (gamma chain) of the citrate lyase to yield holo-acyl carrier protein. This is Apo-citrate lyase phosphoribosyl-dephospho-CoA transferase from Escherichia coli O45:K1 (strain S88 / ExPEC).